A 203-amino-acid chain; its full sequence is Small ribosomal subunit protein uS4 (203 aa).

Residues 93-156 form the S4 RNA-binding domain; that stretch reads RRLDNVVYRL…IKVPAILEAV (64 aa).

Belongs to the universal ribosomal protein uS4 family. Part of the 30S ribosomal subunit. Contacts protein S5. The interaction surface between S4 and S5 is involved in control of translational fidelity.

One of the primary rRNA binding proteins, it binds directly to 16S rRNA where it nucleates assembly of the body of the 30S subunit. Its function is as follows. With S5 and S12 plays an important role in translational accuracy. The sequence is that of Small ribosomal subunit protein uS4 from Streptococcus suis (strain 98HAH33).